The chain runs to 373 residues: D-amino-acid transaminase, chloroplastic (373 aa).

A chloroplast-targeting transit peptide spans 1–57 (MAGLSLEFTVNTWNLRSLSQVPCPLRHGFRFPRRLTRRRTILMCSDSSSQSWNVPVL). R128 serves as a coordination point for pyridoxal 5'-phosphate. Catalysis depends on K222, which acts as the Proton acceptor. Position 222 is an N6-(pyridoxal phosphate)lysine (K222). E255 serves as a coordination point for pyridoxal 5'-phosphate.

The protein belongs to the class-IV pyridoxal-phosphate-dependent aminotransferase family. As to quaternary structure, homodimer. Pyridoxal 5'-phosphate serves as cofactor.

It is found in the plastid. It localises to the chloroplast. It catalyses the reaction D-alanine + 2-oxoglutarate = D-glutamate + pyruvate. The enzyme catalyses 4-amino-4-deoxychorismate = 4-aminobenzoate + pyruvate + H(+). It functions in the pathway cofactor biosynthesis; tetrahydrofolate biosynthesis; 4-aminobenzoate from chorismate: step 2/2. Inhibited by hydroxylamine or amino-oxyacetic acid. In terms of biological role, amino acid aminotransferase showing activity for D-Asp and D-Ala as amino donors with 2-oxoglutarate as an amino acceptor. Can also use D-Met, D-Tyr, D-Phe, D-Gln, D-Trp and D-Asn as substrates, but no activity with L-Asp, L-Ala, L-Leu, L-Ile or L-Val. Also catalyzes the reverse reaction where an amino group is transferred from D-Glu to pyruvate or oxaloacetate to produce D-Ala or D-Asp, respectively. Also involved in folate biosynthesis, acting as an aminodeoxychorismate lyase converting 4-amino-4-deoxychorismate (ADC) to p-aminobenzoate (PABA). This chain is D-amino-acid transaminase, chloroplastic, found in Arabidopsis thaliana (Mouse-ear cress).